Here is a 259-residue protein sequence, read N- to C-terminus: tRNA (guanine-N(1)-)-methyltransferase (259 aa).

S-adenosyl-L-methionine-binding positions include Gly-113 and 133-138 (IGDYVL).

Belongs to the RNA methyltransferase TrmD family. Homodimer.

The protein localises to the cytoplasm. The catalysed reaction is guanosine(37) in tRNA + S-adenosyl-L-methionine = N(1)-methylguanosine(37) in tRNA + S-adenosyl-L-homocysteine + H(+). Its function is as follows. Specifically methylates guanosine-37 in various tRNAs. This chain is tRNA (guanine-N(1)-)-methyltransferase, found in Xanthomonas oryzae pv. oryzae (strain MAFF 311018).